The primary structure comprises 237 residues: MTINALLLSSSRVGDTPYLAHAIPFIKPLTTNAQKWIFIPYAGVSMSYDNYLASVVTGLSELELDISGIHQHPDPQQAIKDADGILIGGGNTFHLLHQLYRYDLVTLIGEQVALGKPYIGWSAGSNVSGQSIRTTNDMPIIEPPSFKALNLLPFQLNPHYSNYQAPGHNGETRAQRLLEFTKVDPLTPVVGIVEGSALWRQGDKLSLLGDQPAYLFCGEQQEIPIPVGSDLSHLLKA.

Residues serine 122, aspartate 137, and histidine 159 each act as charge relay system in the active site.

This sequence belongs to the peptidase S51 family.

The protein localises to the cytoplasm. It catalyses the reaction Dipeptidase E catalyzes the hydrolysis of dipeptides Asp-|-Xaa. It does not act on peptides with N-terminal Glu, Asn or Gln, nor does it cleave isoaspartyl peptides.. Hydrolyzes dipeptides containing N-terminal aspartate residues. May play a role in allowing the cell to use peptide aspartate to spare carbon otherwise required for the synthesis of the aspartate family of amino acids. This Shewanella baltica (strain OS185) protein is Peptidase E.